We begin with the raw amino-acid sequence, 153 residues long: Large ribosomal subunit protein uL13 (153 aa).

Residues 128 to 153 (SEHPHEAQSPEVLDVTSMNSKNTRSA) form a disordered region. Positions 143 to 153 (TSMNSKNTRSA) are enriched in polar residues.

The protein belongs to the universal ribosomal protein uL13 family. In terms of assembly, part of the 50S ribosomal subunit.

Functionally, this protein is one of the early assembly proteins of the 50S ribosomal subunit, although it is not seen to bind rRNA by itself. It is important during the early stages of 50S assembly. The chain is Large ribosomal subunit protein uL13 from Roseobacter denitrificans (strain ATCC 33942 / OCh 114) (Erythrobacter sp. (strain OCh 114)).